Consider the following 1400-residue polypeptide: DNA-directed RNA polymerase subunit beta' (1400 aa).

Zn(2+) is bound by residues cysteine 71, cysteine 73, cysteine 86, and cysteine 89. The Mg(2+) site is built by aspartate 462, aspartate 464, and aspartate 466. Positions 810, 884, 891, and 894 each coordinate Zn(2+). Positions 1377–1400 (REKQATIVPPAAPEAEPLALPPVE) are disordered.

This sequence belongs to the RNA polymerase beta' chain family. The RNAP catalytic core consists of 2 alpha, 1 beta, 1 beta' and 1 omega subunit. When a sigma factor is associated with the core the holoenzyme is formed, which can initiate transcription. Mg(2+) is required as a cofactor. The cofactor is Zn(2+).

The enzyme catalyses RNA(n) + a ribonucleoside 5'-triphosphate = RNA(n+1) + diphosphate. Its function is as follows. DNA-dependent RNA polymerase catalyzes the transcription of DNA into RNA using the four ribonucleoside triphosphates as substrates. This is DNA-directed RNA polymerase subunit beta' from Rhodopseudomonas palustris (strain HaA2).